We begin with the raw amino-acid sequence, 377 residues long: Spermidine/putrescine import ATP-binding protein PotA (377 aa).

The ABC transporter domain maps to 18 to 248; sequence IRLSGISKSF…PKNLFVARFI (231 aa). 50-57 is a binding site for ATP; sequence GPSGCGKT.

The protein belongs to the ABC transporter superfamily. Spermidine/putrescine importer (TC 3.A.1.11.1) family. The complex is composed of two ATP-binding proteins (PotA), two transmembrane proteins (PotB and PotC) and a solute-binding protein (PotD).

Its subcellular location is the cell inner membrane. It carries out the reaction ATP + H2O + polyamine-[polyamine-binding protein]Side 1 = ADP + phosphate + polyamineSide 2 + [polyamine-binding protein]Side 1.. Part of the ABC transporter complex PotABCD involved in spermidine/putrescine import. Responsible for energy coupling to the transport system. The polypeptide is Spermidine/putrescine import ATP-binding protein PotA (Vibrio cholerae serotype O1 (strain ATCC 39315 / El Tor Inaba N16961)).